The following is a 397-amino-acid chain: NADH-quinone oxidoreductase subunit D (397 aa).

Belongs to the complex I 49 kDa subunit family. In terms of assembly, NDH-1 is composed of 14 different subunits. Subunits NuoB, C, D, E, F, and G constitute the peripheral sector of the complex.

It is found in the cell inner membrane. It carries out the reaction a quinone + NADH + 5 H(+)(in) = a quinol + NAD(+) + 4 H(+)(out). In terms of biological role, NDH-1 shuttles electrons from NADH, via FMN and iron-sulfur (Fe-S) centers, to quinones in the respiratory chain. The immediate electron acceptor for the enzyme in this species is believed to be ubiquinone. Couples the redox reaction to proton translocation (for every two electrons transferred, four hydrogen ions are translocated across the cytoplasmic membrane), and thus conserves the redox energy in a proton gradient. The protein is NADH-quinone oxidoreductase subunit D of Magnetococcus marinus (strain ATCC BAA-1437 / JCM 17883 / MC-1).